Reading from the N-terminus, the 45-residue chain is Putative UPF0377 protein YJL222W-B (45 aa).

The protein belongs to the UPF0377 family.

This chain is Putative UPF0377 protein YJL222W-B, found in Saccharomyces cerevisiae (strain ATCC 204508 / S288c) (Baker's yeast).